The sequence spans 106 residues: Serine rich endogenous peptide 7 (106 aa).

The signal sequence occupies residues 1–26 (MGKKCSSKFRQMLVLVLLLIVFTCLS). Composition is skewed to basic and acidic residues over residues 46–56 (GIEDEGQERTH) and 65–77 (RSVEKTHHSEGRR). The disordered stretch occupies residues 46–106 (GIEDEGQERT…GGGRIPVAAS (61 aa)). Short sequence motifs (SCOOP motif) lie at residues 58–72 (LNSKKSSRSVEKTHH) and 86–100 (GIRAGPSKSGQGGGR). 2 consecutive short sequence motifs (sxS motif essential for MIK2 binding) follow at residues 64 to 66 (SRS) and 92 to 94 (SKS).

The protein belongs to the serine rich endogenous peptide (SCOOP) phytocytokine family. In terms of assembly, interacts with MIK2 (via extracellular leucine-rich repeat domain); this interaction triggers the formation of complex between MIK2 and the BAK1/SERK3 and SERK4 coreceptors, and subsequent BAK1 activation by phosphorylation. Mostly expressed in roots, and, to a lower extent, in seedlings shoots.

Its subcellular location is the cell membrane. The protein resides in the secreted. The protein localises to the extracellular space. It is found in the apoplast. Functionally, brassicaceae-specific phytocytokine (plant endogenous peptide released into the apoplast) perceived by MIK2 in a BAK1/SERK3 and SERK4 coreceptors-dependent manner, that modulates various physiological and antimicrobial processes including growth prevention and reactive oxygen species (ROS) response regulation. This is Serine rich endogenous peptide 7 from Arabidopsis thaliana (Mouse-ear cress).